The sequence spans 664 residues: MEISKFADEQLADQIAAGREAVPEVDPIRLIEQVVHRARAGAGVDFDVFESLIGEIDLVEINYLERGLMASRAVCRINVPAPVGDSSDWGTGFLIGPRLLLTNNHVIDSAEDALKATVEFGYELDAEGRLKRTTRFRLSPQDGFVTSPRDALDYTVVAIEENSEDGATPISDFGFLRLDARTGKTEVGQYATIIQHPDAKTKRISLRENKFVKYGDEADPERDNFLWYSSDTANGSSGAAVFTDAWQVVCLHHAGVPDRRMIDGKEHWVLTDKTTAPARIAINLPVDKVHWLANEGVRISKLIADVQERIAAPGFARSTLVDDLVADATGVKAFAGTTPGESIVGPPLVAAPALRLVAAEARRRPTRHTHPANYFDGREGYRSDFLPVEIPLPTLGVNALRHGSPAKVTGAADDVLRYQHFSVVLNANPKRKMAFYTAVNIDGARWTNLERGNDVWFYDPRIPEELQNGDELYGDEPVPSKNYFDRGHLVRRLDPVWGEIRVAKQANDDTFQWTNCSPQYWGFNQGADLWQGLENFLLYNTDDENVQASVFSGPLFRADDEEHRGILIPQFFWKVIAVTDKNDRLYTSGYMVSQQDYALDIPFERLPVGPNSTKPGQNFQVPVAKIIEDTGIVFADEILSADAYSGPSTGRALRTVADIQHPRR.

This is an uncharacterized protein from Sinorhizobium fredii (strain NBRC 101917 / NGR234).